The chain runs to 772 residues: Transducin-like enhancer protein 4 (772 aa).

Disordered regions lie at residues 1 to 24 (MIRD…PAQP) and 183 to 359 (LPIK…LTGL). Positions 1–137 (MIRDLSKMYP…AIIGQQLQAQ (137 aa)) are q domain. The GP domain stretch occupies residues 138–205 (HLSHAHGLPV…HQRDRDSIKS (68 aa)). The segment covering 184 to 203 (PIKDEKKHHDSDHQRDRDSI) has biased composition (basic and acidic residues). Positions 204–213 (KSSSVSPSAS) are enriched in low complexity. A ccN domain region spans residues 206-275 (SSVSPSASFR…SPRGSPAHSP (70 aa)). Basic and acidic residues-rich tracts occupy residues 216 to 253 (AAEK…KSDD) and 274 to 290 (SPRE…KKDA). The tract at residues 276–452 (RENGLDKPRL…GGKPAYSFHV (177 aa)) is SP domain. Low complexity predominate over residues 291–306 (PISPASIASSSSTPSS). The segment covering 307–316 (KSKEHSHNEK) has biased composition (basic and acidic residues). A compositionally biased stretch (polar residues) spans 318–329 (TTPVSKSNTPTP). WD repeat units lie at residues 484–522 (NHGE…NKSP), 530–569 (NRDN…PRIK), 574–613 (SSAP…LVRQ), 616–655 (GHTD…QLQQ), 657–696 (DFTS…KYQL), 698–737 (LHES…SIFQ), and 739–772 (KESS…EVIY).

It belongs to the WD repeat Groucho/TLE family. In terms of assembly, interacts with tcf7, tcf7l1, ripply2.2/bowline, dscr6/ripply3 and foxd3. Associates with tbx6 in the presence of ripply2.2/bowline. Interacts with EFNB1 through the SP domain. In terms of processing, ubiquitinated by XIAP/BIRC4. In terms of tissue distribution, expressed at high levels in the spleen and ovary.

The protein localises to the nucleus. Its function is as follows. Transcriptional corepressor. Functions with ripply2.2/bowline to down regulate transcription of tbx6-dependent gene expression. Represses transcription of siamois and nodal3. This chain is Transducin-like enhancer protein 4 (tle4), found in Xenopus laevis (African clawed frog).